The following is an 82-amino-acid chain: Small ribosomal subunit protein bS16 (82 aa).

It belongs to the bacterial ribosomal protein bS16 family.

The sequence is that of Small ribosomal subunit protein bS16 from Desulfosudis oleivorans (strain DSM 6200 / JCM 39069 / Hxd3) (Desulfococcus oleovorans).